The following is a 693-amino-acid chain: Zinc finger protein 441 (693 aa).

The region spanning 4–79 (VAFEDVAINF…ERACEIKDNS (76 aa)) is the KRAB domain. The segment at 169 to 190 (YDCKECASFSSLENLQRHMAAH) adopts a C2H2-type 1 zinc-finger fold. The C2H2-type 2; degenerate zinc finger occupies 196-218 (RICKLCGNAFIWPSLFHMLRRTH). A C2H2-type 3; degenerate zinc finger spans residues 224 to 246 (YEYEQCSTAFPAYSSTLRHERTH). The C2H2-type 4; degenerate zinc finger occupies 252–274 (YQCKQCGKAFSCSCYTQLYERTH). 15 consecutive C2H2-type zinc fingers follow at residues 280–302 (YECKQCGKAFYHLGSFQRHMIVH), 308–330 (HKCKICGKGFLSPSSVRRHKRTH), 336–358 (YECKYCGKAFSDCTGFRRHMITH), 364–386 (HKCKVCGKAFDSPSLCRRHETTH), 392–413 (YKCECGKAFSDFYYFRNHETTH), 419–441 (YKCKQCGKAFICCTYLQIHERIH), 447–469 (YKCKQCGKAFRSSNYIRVHEKTH), 475–497 (YECKQCGKALSHLKSFQRHMIMH), 503–525 (HKCKICGKSFDSPSSFRRHERIH), 531–553 (YKCKLCGKGFRSSSYIQLHERTH), 559–581 (YGCQQCGKALSDLSSFRRHMITH), 587–609 (HKCKICGKGFDYPSSVQRHERTH), 615–637 (YECKECGKAFSHSSYLRIHERVH), 643–665 (YKCKECGKPFHCPSAFHKHERTH), and 671–693 (YKCKECGEAFHCISSFHKHEMTH).

The protein belongs to the krueppel C2H2-type zinc-finger protein family.

It is found in the nucleus. Its function is as follows. May be involved in transcriptional regulation. This chain is Zinc finger protein 441 (ZNF441), found in Homo sapiens (Human).